The sequence spans 180 residues: ATP synthase subunit b 2 (180 aa).

A helical transmembrane segment spans residues isoleucine 33–proline 53.

Belongs to the ATPase B chain family. In terms of assembly, F-type ATPases have 2 components, F(1) - the catalytic core - and F(0) - the membrane proton channel. F(1) has five subunits: alpha(3), beta(3), gamma(1), delta(1), epsilon(1). F(0) has three main subunits: a(1), b(2) and c(10-14). The alpha and beta chains form an alternating ring which encloses part of the gamma chain. F(1) is attached to F(0) by a central stalk formed by the gamma and epsilon chains, while a peripheral stalk is formed by the delta and b chains.

The protein resides in the cell inner membrane. F(1)F(0) ATP synthase produces ATP from ADP in the presence of a proton or sodium gradient. F-type ATPases consist of two structural domains, F(1) containing the extramembraneous catalytic core and F(0) containing the membrane proton channel, linked together by a central stalk and a peripheral stalk. During catalysis, ATP synthesis in the catalytic domain of F(1) is coupled via a rotary mechanism of the central stalk subunits to proton translocation. Functionally, component of the F(0) channel, it forms part of the peripheral stalk, linking F(1) to F(0). The b'-subunit is a diverged and duplicated form of b found in plants and photosynthetic bacteria. This is ATP synthase subunit b 2 (atpF2) from Cereibacter sphaeroides (strain ATCC 17029 / ATH 2.4.9) (Rhodobacter sphaeroides).